Reading from the N-terminus, the 444-residue chain is Glutamyl-tRNA reductase (444 aa).

Substrate-binding positions include 49-52 (TCNR), Ser109, 114-116 (ETQ), and Gln120. Cys50 serves as the catalytic Nucleophile. 189-194 (GAGKMG) provides a ligand contact to NADP(+).

It belongs to the glutamyl-tRNA reductase family. In terms of assembly, homodimer.

The enzyme catalyses (S)-4-amino-5-oxopentanoate + tRNA(Glu) + NADP(+) = L-glutamyl-tRNA(Glu) + NADPH + H(+). It participates in porphyrin-containing compound metabolism; protoporphyrin-IX biosynthesis; 5-aminolevulinate from L-glutamyl-tRNA(Glu): step 1/2. Functionally, catalyzes the NADPH-dependent reduction of glutamyl-tRNA(Glu) to glutamate 1-semialdehyde (GSA). This is Glutamyl-tRNA reductase from Bacillus anthracis (strain A0248).